A 225-amino-acid polypeptide reads, in one-letter code: NAD(P)H-quinone oxidoreductase subunit K, chloroplastic (225 aa).

[4Fe-4S] cluster is bound by residues C43, C44, C108, and C139.

This sequence belongs to the complex I 20 kDa subunit family. As to quaternary structure, NDH is composed of at least 16 different subunits, 5 of which are encoded in the nucleus. [4Fe-4S] cluster serves as cofactor.

It localises to the plastid. The protein localises to the chloroplast thylakoid membrane. The enzyme catalyses a plastoquinone + NADH + (n+1) H(+)(in) = a plastoquinol + NAD(+) + n H(+)(out). It catalyses the reaction a plastoquinone + NADPH + (n+1) H(+)(in) = a plastoquinol + NADP(+) + n H(+)(out). Functionally, NDH shuttles electrons from NAD(P)H:plastoquinone, via FMN and iron-sulfur (Fe-S) centers, to quinones in the photosynthetic chain and possibly in a chloroplast respiratory chain. The immediate electron acceptor for the enzyme in this species is believed to be plastoquinone. Couples the redox reaction to proton translocation, and thus conserves the redox energy in a proton gradient. The sequence is that of NAD(P)H-quinone oxidoreductase subunit K, chloroplastic from Oenothera argillicola (Appalachian evening primrose).